The following is a 385-amino-acid chain: UPF0284 protein A9601_04941 (385 aa).

It belongs to the UPF0284 family.

The protein is UPF0284 protein A9601_04941 of Prochlorococcus marinus (strain AS9601).